Reading from the N-terminus, the 561-residue chain is Arginine--tRNA ligase (561 aa).

Positions 129–139 (ANPTGPLHIGH) match the 'HIGH' region motif.

It belongs to the class-I aminoacyl-tRNA synthetase family. As to quaternary structure, monomer.

It localises to the cytoplasm. The enzyme catalyses tRNA(Arg) + L-arginine + ATP = L-arginyl-tRNA(Arg) + AMP + diphosphate. This chain is Arginine--tRNA ligase, found in Geotalea uraniireducens (strain Rf4) (Geobacter uraniireducens).